The primary structure comprises 78 residues: MSRVCQVTKKRPVTGNRRSHAMNATKRRFLPNLHRHRFWIESEKRFITLRLSAKGIRIIDKKGIEAVLEEIKARGEKY.

The protein belongs to the bacterial ribosomal protein bL28 family.

The chain is Large ribosomal subunit protein bL28 from Hamiltonella defensa subsp. Acyrthosiphon pisum (strain 5AT).